Consider the following 179-residue polypeptide: Large ribosomal subunit protein uL6 (179 aa).

The protein belongs to the universal ribosomal protein uL6 family. As to quaternary structure, part of the 50S ribosomal subunit.

In terms of biological role, this protein binds to the 23S rRNA, and is important in its secondary structure. It is located near the subunit interface in the base of the L7/L12 stalk, and near the tRNA binding site of the peptidyltransferase center. In Syntrophotalea carbinolica (strain DSM 2380 / NBRC 103641 / GraBd1) (Pelobacter carbinolicus), this protein is Large ribosomal subunit protein uL6.